Reading from the N-terminus, the 209-residue chain is Potassium-transporting ATPase KdpC subunit (209 aa).

A helical transmembrane segment spans residues 18 to 38 (ALALFVLLGLGLGYSLVATGI).

This sequence belongs to the KdpC family. In terms of assembly, the system is composed of three essential subunits: KdpA, KdpB and KdpC.

It is found in the cell inner membrane. Functionally, part of the high-affinity ATP-driven potassium transport (or Kdp) system, which catalyzes the hydrolysis of ATP coupled with the electrogenic transport of potassium into the cytoplasm. This subunit acts as a catalytic chaperone that increases the ATP-binding affinity of the ATP-hydrolyzing subunit KdpB by the formation of a transient KdpB/KdpC/ATP ternary complex. The sequence is that of Potassium-transporting ATPase KdpC subunit from Xanthomonas campestris pv. campestris (strain 8004).